The chain runs to 1439 residues: Histone-lysine N-methyltransferase NSD3 (1439 aa).

Positions 121–151 (PHEILEKPSPPQPPPPPSVPQTVIPKKTGSP) are disordered. Pro residues predominate over residues 128–139 (PSPPQPPPPPSV). Ser-150 is subject to Phosphoserine. A KIKL motif is present at residues 154–157 (KLKI). The segment at 181-247 (QASEHTKSKH…PREEPVLKEA (67 aa)) is disordered. Positions 187-201 (KSKHESRKEKRKKSN) are enriched in basic residues. A compositionally biased stretch (basic and acidic residues) spans 202-244 (RHESSRSEERRSHKIPKLEPEGQNRPNERVDTAPEKPREEPVL). Glycyl lysine isopeptide (Lys-Gly) (interchain with G-Cter in SUMO2) cross-links involve residues Lys-218 and Lys-245. One can recognise a PWWP 1 domain in the interval 270 to 333 (VGDLVWSKVG…EKRVREYKGH (64 aa)). Disordered stretches follow at residues 344–367 (AKQA…ERAQ) and 401–466 (EASS…PPPV). 2 stretches are compositionally biased toward polar residues: residues 401 to 413 (EASS…VTSK) and 425 to 445 (VLNS…QSST). Lys-413 participates in a covalent cross-link: Glycyl lysine isopeptide (Lys-Gly) (interchain with G-Cter in SUMO2). Ser-457 is modified (phosphoserine). Glycyl lysine isopeptide (Lys-Gly) (interchain with G-Cter in SUMO2) cross-links involve residues Lys-502 and Lys-532. A disordered region spans residues 540 to 695 (QDRLIISSPS…VDSSLSRRGV (156 aa)). A compositionally biased stretch (polar residues) spans 546 to 568 (SSPSQRSEKPAQSASSPEATSGS). Residues 583–595 (TRSESEKSAEVVP) show a composition bias toward basic and acidic residues. Phosphoserine occurs at positions 585, 587, and 590. A Glycyl lysine isopeptide (Lys-Gly) (interchain with G-Cter in SUMO2) cross-link involves residue Lys-628. The span at 637–648 (STDVETASCTYR) shows a compositional bias: polar residues. Ser-655 carries the post-translational modification Phosphoserine. Positions 670-691 (DSPSATADADASDAQSVDSSLS) are enriched in low complexity. PHD-type zinc fingers lie at residues 701 to 748 (DTVC…CETG), 749 to 805 (QHPC…CSME), and 862 to 955 (VGFC…CKAG). Lys-790 is modified (N6-acetyllysine). A PWWP 2 domain is found at 960 to 1025 (YKQIVWVKLG…QGRVFPYVEG (66 aa)). The stretch at 1036-1065 (INKTFKKALEEAAKRFQELKAQRESKEALE) forms a coiled coil. Residues 1096–1146 (SEIPRCNCKPGDENPCGLESQCLNRMSQYECHPQVCPAGDRCQNQCFTKRL) form the AWS domain. The region spanning 1148-1265 (PDAEVIKTER…AGMELTFNYN (118 aa)) is the SET domain. Lys-1154 is covalently cross-linked (Glycyl lysine isopeptide (Lys-Gly) (interchain with G-Cter in SUMO2)). One can recognise a Post-SET domain in the interval 1272 to 1288 (GRTVCHCGADNCSGFLG). The PHD-type 4; atypical zinc finger occupies 1323 to 1370 (EDYCFQCGDGGELVMCDKKDCPKAYHLLCLNLTQPPHGKWECPWHRCD).

This sequence belongs to the class V-like SAM-binding methyltransferase superfamily. Histone-lysine methyltransferase family. SET2 subfamily. In terms of assembly, interacts with BRD4. Interacts (via KIKL motif) with BRD3 (via NET domain).

The protein localises to the nucleus. The protein resides in the chromosome. The enzyme catalyses L-lysyl(4)-[histone H3] + 2 S-adenosyl-L-methionine = N(6),N(6)-dimethyl-L-lysyl(4)-[histone H3] + 2 S-adenosyl-L-homocysteine + 2 H(+). It carries out the reaction L-lysyl(27)-[histone H3] + 2 S-adenosyl-L-methionine = N(6),N(6)-dimethyl-L-lysyl(27)-[histone H3] + 2 S-adenosyl-L-homocysteine + 2 H(+). Functionally, histone methyltransferase. Preferentially dimethylates 'Lys-4' and 'Lys-27' of histone H3 forming H3K4me2 and H3K27me2. H3 'Lys-4' methylation represents a specific tag for epigenetic transcriptional activation, while 'Lys-27' is a mark for transcriptional repression. This Mus musculus (Mouse) protein is Histone-lysine N-methyltransferase NSD3 (Nsd3).